The primary structure comprises 227 residues: Cytochrome c oxidase subunit 2 (227 aa).

Residues Met1 to Ser14 are Mitochondrial intermembrane-facing. A helical membrane pass occupies residues Pro15–Met45. Over Leu46 to Gln59 the chain is Mitochondrial matrix. Residues Glu60–Met87 form a helical membrane-spanning segment. Residues Asp88–Val227 lie on the Mitochondrial intermembrane side of the membrane. Cu cation is bound by residues His161, Cys196, Glu198, Cys200, His204, and Met207. Mg(2+) is bound at residue Glu198. At Tyr218 the chain carries Phosphotyrosine.

The protein belongs to the cytochrome c oxidase subunit 2 family. Component of the cytochrome c oxidase (complex IV, CIV), a multisubunit enzyme composed of 14 subunits. The complex is composed of a catalytic core of 3 subunits MT-CO1, MT-CO2 and MT-CO3, encoded in the mitochondrial DNA, and 11 supernumerary subunits COX4I, COX5A, COX5B, COX6A, COX6B, COX6C, COX7A, COX7B, COX7C, COX8 and NDUFA4, which are encoded in the nuclear genome. The complex exists as a monomer or a dimer and forms supercomplexes (SCs) in the inner mitochondrial membrane with NADH-ubiquinone oxidoreductase (complex I, CI) and ubiquinol-cytochrome c oxidoreductase (cytochrome b-c1 complex, complex III, CIII), resulting in different assemblies (supercomplex SCI(1)III(2)IV(1) and megacomplex MCI(2)III(2)IV(2)). Found in a complex with TMEM177, COA6, COX18, COX20, SCO1 and SCO2. Interacts with TMEM177 in a COX20-dependent manner. Interacts with COX20. Interacts with COX16. Cu cation serves as cofactor.

The protein resides in the mitochondrion inner membrane. The catalysed reaction is 4 Fe(II)-[cytochrome c] + O2 + 8 H(+)(in) = 4 Fe(III)-[cytochrome c] + 2 H2O + 4 H(+)(out). Its function is as follows. Component of the cytochrome c oxidase, the last enzyme in the mitochondrial electron transport chain which drives oxidative phosphorylation. The respiratory chain contains 3 multisubunit complexes succinate dehydrogenase (complex II, CII), ubiquinol-cytochrome c oxidoreductase (cytochrome b-c1 complex, complex III, CIII) and cytochrome c oxidase (complex IV, CIV), that cooperate to transfer electrons derived from NADH and succinate to molecular oxygen, creating an electrochemical gradient over the inner membrane that drives transmembrane transport and the ATP synthase. Cytochrome c oxidase is the component of the respiratory chain that catalyzes the reduction of oxygen to water. Electrons originating from reduced cytochrome c in the intermembrane space (IMS) are transferred via the dinuclear copper A center (CU(A)) of subunit 2 and heme A of subunit 1 to the active site in subunit 1, a binuclear center (BNC) formed by heme A3 and copper B (CU(B)). The BNC reduces molecular oxygen to 2 water molecules using 4 electrons from cytochrome c in the IMS and 4 protons from the mitochondrial matrix. The chain is Cytochrome c oxidase subunit 2 (MT-CO2) from Cerdocyon thous (Crab-eating fox).